Reading from the N-terminus, the 426-residue chain is MASGHSLLLENAQQVVLVCARGERFLARDALRSLAVLEGASLVVGKDGFIKAIGPADVIQRQFSGETFEEIIDCSGKCILPGLVDAHTHPVWAGERVHEFAMKLAGATYMEIHQAGGGIHFTVERTRQATEEELFRSLQQRLQCMMRAGTTLVECKSGYGLDLETELKMLRVIERARRELDIGISATYCGAHSVPKGKTATEAADDIINNHLPKLKELGRNGEIHVDNIDVFCEKGVFDLDSTRRILQRGKDIGLQINFHGDELHPMKAAELGAELGAQAISHLEEVSDEGIVAMATARCSAILLPTTAYMLRLKQPRARKMLDEGVIVALGSDFNPNAYCFSMPMVMHLACVNMRMSMPEALAAATINAAYALGKSHTHGSLEVGKQGDLIIINSSRWEHLIYQFGGHHELIEYVIAKGKLIYKT.

Residues Tyr-159 and His-192 each coordinate 4-imidazolone-5-propanoate. Residue Tyr-159 participates in N-formimidoyl-L-glutamate binding. His-260 serves as a coordination point for Fe(3+). Position 260 (His-260) interacts with Zn(2+). A 4-imidazolone-5-propanoate-binding site is contributed by Glu-263. Asp-334 serves as a coordination point for Fe(3+). Residue Asp-334 participates in Zn(2+) binding. Position 336 (Asn-336) interacts with N-formimidoyl-L-glutamate.

This sequence belongs to the metallo-dependent hydrolases superfamily. HutI family. Zn(2+) is required as a cofactor. It depends on Fe(3+) as a cofactor.

The enzyme catalyses 4-imidazolone-5-propanoate + H2O = N-formimidoyl-L-glutamate. It functions in the pathway amino-acid degradation; L-histidine degradation into L-glutamate; N-formimidoyl-L-glutamate from L-histidine: step 3/3. The sequence is that of Probable imidazolonepropionase (AMDHD1) from Homo sapiens (Human).